A 312-amino-acid chain; its full sequence is Acetyl-coenzyme A carboxylase carboxyl transferase subunit alpha (312 aa).

The 251-residue stretch at 36-286 (NLEKEISKTY…ADYVKKSLNE (251 aa)) folds into the CoA carboxyltransferase C-terminal domain.

Belongs to the AccA family. In terms of assembly, acetyl-CoA carboxylase is a heterohexamer composed of biotin carboxyl carrier protein (AccB), biotin carboxylase (AccC) and two subunits each of ACCase subunit alpha (AccA) and ACCase subunit beta (AccD).

The protein resides in the cytoplasm. The enzyme catalyses N(6)-carboxybiotinyl-L-lysyl-[protein] + acetyl-CoA = N(6)-biotinyl-L-lysyl-[protein] + malonyl-CoA. It participates in lipid metabolism; malonyl-CoA biosynthesis; malonyl-CoA from acetyl-CoA: step 1/1. Functionally, component of the acetyl coenzyme A carboxylase (ACC) complex. First, biotin carboxylase catalyzes the carboxylation of biotin on its carrier protein (BCCP) and then the CO(2) group is transferred by the carboxyltransferase to acetyl-CoA to form malonyl-CoA. This is Acetyl-coenzyme A carboxylase carboxyl transferase subunit alpha from Campylobacter jejuni (strain RM1221).